We begin with the raw amino-acid sequence, 278 residues long: Thioredoxin-related transmembrane protein 1 (278 aa).

The first 26 residues, 1 to 26 (MAPSGSLRIPVAVLLLLLWGAPWAHG), serve as a signal peptide directing secretion. Residues 27 to 132 (KRSDVRIITD…FINFISDKEW (106 aa)) enclose the Thioredoxin domain. Residues 27-180 (KRSDVRIITD…EDLGLPIWGS (154 aa)) are Extracellular-facing. Active-site nucleophile residues include Cys56 and Cys59. A disulfide bridge connects residues Cys56 and Cys59. The chain crosses the membrane as a helical span at residues 181-203 (YTVFALATLLSGLLLGLFMIFVA). Residues 204-278 (DCLCPSKRRR…VGPSLATDKS (75 aa)) are Cytoplasmic-facing. S-palmitoyl cysteine attachment occurs at residues Cys205 and Cys207. The segment at 213 to 278 (RPQPYPSRKL…VGPSLATDKS (66 aa)) is disordered. Ser226, Ser245, Ser268, Ser272, and Ser278 each carry phosphoserine. A compositionally biased stretch (acidic residues) spans 235 to 250 (EEQEADVEDVSEEESE).

In terms of assembly, interacts with ATP2A2. In terms of processing, palmitoylated; palmitoylation is required for localization to mitochondria-associated endoplasmic reticulum membrane (MAM).

The protein resides in the endoplasmic reticulum membrane. The protein localises to the mitochondrion membrane. It localises to the secreted. It catalyses the reaction Catalyzes the rearrangement of -S-S- bonds in proteins.. Thiredoxin domain-containing protein that participates in various redox reactions through the reversible oxidation of its active center dithiol to a disulfide and catalyze dithiol-disulfide exchange reactions. Acts as a key inhibitor of the alternative triglyceride biosynthesis pathway by inhibiting the activity of TMEM68/DIESL at the endoplasmic reticulum, thereby restricting accumulation of triacylglycerol. The alternative triglyceride biosynthesis pathway mediates formation of triacylglycerol from diacylglycerol and membrane phospholipids. Acts as a protein disulfide isomerase by catalyzing formation or reduction of disulfide bonds. Specifically mediates formation of disulfide bonds of transmembrane proteins at the endoplasmic reticulum membrane. Involved in endoplasmic reticulum-associated degradation (ERAD) via its protein disulfide isomerase activity by acting on folding-defective polypeptides at the endoplasmic reticulum membrane. Acts as a negative regulator of platelet aggregation following secretion in the extracellular space. Acts as a regulator of endoplasmic reticulum-mitochondria contact sites via its ability to regulate redox signals. Regulates endoplasmic reticulum-mitochondria Ca(2+) flux. This is Thioredoxin-related transmembrane protein 1 (TMX1) from Bos taurus (Bovine).